The chain runs to 401 residues: Carbamoyl phosphate synthase small chain (401 aa).

Residues 1 to 203 (MTATPAWTIQ…EGYSTLGETD (203 aa)) form a CPSase region. Residues serine 56, glycine 255, and glycine 257 each contribute to the L-glutamine site. A Glutamine amidotransferase type-1 domain is found at 207-395 (HVVALDYGVK…LNLIREKKGE (189 aa)). Catalysis depends on cysteine 284, which acts as the Nucleophile. L-glutamine-binding residues include leucine 285, glutamine 288, asparagine 326, glycine 328, and phenylalanine 329. Residues histidine 368 and glutamate 370 contribute to the active site.

The protein belongs to the CarA family. In terms of assembly, composed of two chains; the small (or glutamine) chain promotes the hydrolysis of glutamine to ammonia, which is used by the large (or ammonia) chain to synthesize carbamoyl phosphate. Tetramer of heterodimers (alpha,beta)4.

The enzyme catalyses hydrogencarbonate + L-glutamine + 2 ATP + H2O = carbamoyl phosphate + L-glutamate + 2 ADP + phosphate + 2 H(+). It carries out the reaction L-glutamine + H2O = L-glutamate + NH4(+). It participates in amino-acid biosynthesis; L-arginine biosynthesis; carbamoyl phosphate from bicarbonate: step 1/1. The protein operates within pyrimidine metabolism; UMP biosynthesis via de novo pathway; (S)-dihydroorotate from bicarbonate: step 1/3. Small subunit of the glutamine-dependent carbamoyl phosphate synthetase (CPSase). CPSase catalyzes the formation of carbamoyl phosphate from the ammonia moiety of glutamine, carbonate, and phosphate donated by ATP, constituting the first step of 2 biosynthetic pathways, one leading to arginine and/or urea and the other to pyrimidine nucleotides. The small subunit (glutamine amidotransferase) binds and cleaves glutamine to supply the large subunit with the substrate ammonia. The sequence is that of Carbamoyl phosphate synthase small chain from Rhizobium meliloti (strain 1021) (Ensifer meliloti).